We begin with the raw amino-acid sequence, 169 residues long: Disulfide bond formation protein B (169 aa).

Residues 1-13 (MQSLISFAHSRLS) lie on the Cytoplasmic side of the membrane. A helical membrane pass occupies residues 14–30 (WGILALSALALESAALY). Topologically, residues 31–48 (FQHIMKLDPCVMCIYQRV) are periplasmic. A disulfide bridge connects residues Cys-40 and Cys-43. A helical membrane pass occupies residues 49 to 64 (AVFGLLGAGLFGFMAP). At 65–71 (ANRVIRA) the chain is on the cytoplasmic side. A helical transmembrane segment spans residues 72–89 (LGALLWGISAAWGLKLAL). The Periplasmic segment spans residues 90-144 (ELVDMQNNPNPFSTCSFLPEFPSWLQLHEWLPSVFMPTGMCTDIPWEFAGVTMGE). Cys-104 and Cys-130 are joined by a disulfide. A helical membrane pass occupies residues 145 to 163 (WMIVAFSVYLLAWLAFIVP). Over 164–169 (MLKKSA) the chain is Cytoplasmic.

It belongs to the DsbB family.

The protein resides in the cell inner membrane. Required for disulfide bond formation in some periplasmic proteins. Acts by oxidizing the DsbA protein. This is Disulfide bond formation protein B from Shewanella amazonensis (strain ATCC BAA-1098 / SB2B).